The chain runs to 167 residues: Transcription antitermination protein NusB (167 aa).

The segment at 1 to 32 is disordered; the sequence is MSDTPETGKPAAGTKPAARTEAKAPPKSARRR.

This sequence belongs to the NusB family.

Its function is as follows. Involved in transcription antitermination. Required for transcription of ribosomal RNA (rRNA) genes. Binds specifically to the boxA antiterminator sequence of the ribosomal RNA (rrn) operons. The protein is Transcription antitermination protein NusB of Cupriavidus pinatubonensis (strain JMP 134 / LMG 1197) (Cupriavidus necator (strain JMP 134)).